A 159-amino-acid chain; its full sequence is Neurotrophin-3 (159 aa).

The first 3 residues, 1–3 (IQS), serve as a signal peptide directing secretion. Positions 4 to 115 (TSMDQGILTE…VQNRTSRRKR (112 aa)) are excised as a propeptide. Positions 91 to 129 (APLEPPPLYLTEEPLVQNRTSRRKREGKRHRGEYSVCDS) are disordered. An N-linked (GlcNAc...) asparagine glycan is attached at asparagine 108. A compositionally biased stretch (basic residues) spans 110–121 (TSRRKREGKRHR).

This sequence belongs to the NGF-beta family.

It is found in the secreted. Functionally, seems to promote the survival of visceral and proprioceptive sensory neurons. The sequence is that of Neurotrophin-3 (NTF3) from Candoia carinata (Papuan tree boa).